The following is a 103-amino-acid chain: Pyrimidine/purine nucleoside phosphorylase (103 aa).

It belongs to the nucleoside phosphorylase PpnP family.

It carries out the reaction a purine D-ribonucleoside + phosphate = a purine nucleobase + alpha-D-ribose 1-phosphate. The catalysed reaction is adenosine + phosphate = alpha-D-ribose 1-phosphate + adenine. It catalyses the reaction cytidine + phosphate = cytosine + alpha-D-ribose 1-phosphate. The enzyme catalyses guanosine + phosphate = alpha-D-ribose 1-phosphate + guanine. It carries out the reaction inosine + phosphate = alpha-D-ribose 1-phosphate + hypoxanthine. The catalysed reaction is thymidine + phosphate = 2-deoxy-alpha-D-ribose 1-phosphate + thymine. It catalyses the reaction uridine + phosphate = alpha-D-ribose 1-phosphate + uracil. The enzyme catalyses xanthosine + phosphate = alpha-D-ribose 1-phosphate + xanthine. In terms of biological role, catalyzes the phosphorolysis of diverse nucleosides, yielding D-ribose 1-phosphate and the respective free bases. Can use uridine, adenosine, guanosine, cytidine, thymidine, inosine and xanthosine as substrates. Also catalyzes the reverse reactions. The protein is Pyrimidine/purine nucleoside phosphorylase of Chlorobium chlorochromatii (strain CaD3).